A 600-amino-acid polypeptide reads, in one-letter code: Probable tripeptidyl-peptidase SED4 (600 aa).

Residues Met1–Ala22 form the signal peptide. Residues Ala23 to Thr202 constitute a propeptide, removed in mature form. N-linked (GlcNAc...) asparagine glycans are attached at residues Asn210 and Asn281. Positions Thr212 to Ile600 constitute a Peptidase S53 domain. Active-site charge relay system residues include Glu288 and Asp292. N-linked (GlcNAc...) asparagine glycosylation is found at Asn323 and Asn404. Ser504 functions as the Charge relay system in the catalytic mechanism. Residues Asp546, Ile547, Gly579, and Asp581 each coordinate Ca(2+).

Ca(2+) is required as a cofactor.

It localises to the secreted. The protein resides in the extracellular space. The enzyme catalyses Release of an N-terminal tripeptide from a polypeptide.. Its function is as follows. Secreted tripeptidyl-peptidase which degrades proteins at acidic pHs and is involved in virulence. The protein is Probable tripeptidyl-peptidase SED4 (SED4) of Trichophyton verrucosum (strain HKI 0517).